The primary structure comprises 1198 residues: DNA polymerase II large subunit (1198 aa).

2 disordered regions span residues 281 to 332 (YKTG…PQKK) and 534 to 553 (HWAE…AAES). The span at 286-319 (DTDEADADSDDGTDEDAADDSDIDDSSAGDEEAD) shows a compositional bias: acidic residues.

It belongs to the archaeal DNA polymerase II family. In terms of assembly, heterodimer of a large subunit and a small subunit.

It carries out the reaction DNA(n) + a 2'-deoxyribonucleoside 5'-triphosphate = DNA(n+1) + diphosphate. It catalyses the reaction Exonucleolytic cleavage in the 3'- to 5'-direction to yield nucleoside 5'-phosphates.. Functionally, possesses two activities: a DNA synthesis (polymerase) and an exonucleolytic activity that degrades single-stranded DNA in the 3'- to 5'-direction. Has a template-primer preference which is characteristic of a replicative DNA polymerase. The protein is DNA polymerase II large subunit of Natronomonas pharaonis (strain ATCC 35678 / DSM 2160 / CIP 103997 / JCM 8858 / NBRC 14720 / NCIMB 2260 / Gabara) (Halobacterium pharaonis).